The primary structure comprises 1207 residues: MAYVALCKALYDYVAQAEDELNLTEDDHLYILESDDPEWWKAKLRRLDEHGTPIQDDSDDSTVGLVPANYVEEAEPIRLSRALYDYEAQTEEELSMAEDELLRVYESDGVWLLVKKQGNDPLSGGEGRLGYVPANYVDEAEAVDTGAAPAVEDEYTAADEDDEDDDDTDVTGSGAPIPQIHLPQTAQLGKGDNIKMWPVSALDSKKKKKKGTLGIGNASLFFASESDKTPVKKISILHIASHSLEKGKTLHLQLSPEAGLSESTLDFHAGSKDAANDIIRKIEVSKANALTAAAAPVPVPVPAPAPPAAAAAAASAAVPLPPPPPPAPPVASAAALPPPTRTTSATLPPPVRKNVSFQSQPAAEPEEAVEHGVAMYDFEAQGDDELTVTENEHLIILEKENDDWWKVRNDAGQEGVVPASYVEATDASAAAGASSGATAAAALAAQQEEEERLRREEEEAATVAEAERQREAVDRQREARERGEREEKERARREALKAQPVPAPPKLTQRPSTTDVSRAAKNVAIPQGRSAPERPKDGGSRSKPSPTNTRMWTDRTGAFKVEAEFLGFNQGKIRLHKMNGVVIEVAIEKMSNGDIAFLEDITGKKLNPTDEEIAASAARRRERERERQSSRPQSSAVAGMPREDRERERERRKEKEREQRRRESARSGPKRNVDWFEFFLAAGVDVDDCTRYASSFERDKIDETVLADLDPSTLRSIGLREGDIIRVTKFIDKKYRRDKSHSSLSSSRASGRANANTAADLERQIKADEELARKLQEQESSARRGDSVSPAPPQLFSGPDGTLKNNTRRGRPTPKSTSSSNVDAASLAAASESLARTATPPARTATASPAVAPKRTGSSLANGFDDDAWTPRPPSTKPTTPARPTVASPAPSTPAAPAAPPAPTPPPAAVAVASSAPPADPNSALFEKLAAMKAPSASVSPRPGVSPSPGSSFLGQSQMYNPNAPRGPFAPVPANQGLLQPLVPTQGTGQFVPTKTGMMGMQMTGMQPQLTGWGMQGMQGMQPQMTGFNNSMGSMSVMGGMGMQPQATGFGNGNGYGMNGSSPFTGGQISTQQTGLVGMGMQPQATGFNNFGQNAQQMMTQQTGFGMGSQQQGQQLQAEQDEKEKFKASNIFQQMKTGAFAKDPNAAPQSSEKYDALRPQPTGFQPGGVMPQFTGMGFGQSAQQQQQQQQQQYPYNNAYGGGFGGGF.

SH3 domains follow at residues alanine 2 to proline 76 and isoleucine 77 to alanine 142. Disordered regions lie at residues valine 143 to threonine 185, proline 325 to glutamate 367, glutamate 448 to threonine 553, threonine 609 to serine 667, arginine 736 to threonine 757, arginine 773 to alanine 919, serine 936 to leucine 979, and glycine 1175 to phenylalanine 1207. Positions valine 151–aspartate 169 are enriched in acidic residues. The SH3 3 domain maps to glutamate 367–alanine 427. Composition is skewed to basic and acidic residues over residues glutamate 465–leucine 496 and alanine 531–serine 540. Polar residues predominate over residues serine 542 to methionine 551. Composition is skewed to basic and acidic residues over residues arginine 619–serine 629 and proline 641–alanine 665. The span at serine 742–threonine 757 shows a compositional bias: low complexity. The segment covering arginine 773–aspartate 786 has biased composition (basic and acidic residues). 2 stretches are compositionally biased toward low complexity: residues serine 818–proline 853 and lysine 877–alanine 890. The span at proline 891–alanine 908 shows a compositional bias: pro residues. Composition is skewed to low complexity over residues alanine 909 to alanine 919, serine 936 to serine 952, and glutamine 1183 to glutamine 1192.

The protein belongs to the SLA1 family. As to quaternary structure, component of the PAN1 actin cytoskeleton-regulatory complex.

It is found in the cell membrane. The protein resides in the endosome membrane. The protein localises to the cytoplasm. Its subcellular location is the cytoskeleton. It localises to the actin patch. Component of the PAN1 actin cytoskeleton-regulatory complex required for the internalization of endosomes during actin-coupled endocytosis. The complex links the site of endocytosis to the cell membrane-associated actin cytoskeleton. Mediates uptake of external molecules and vacuolar degradation of plasma membrane proteins. Plays a role in the proper organization of the cell membrane-associated actin cytoskeleton and promotes its destabilization. This chain is Actin cytoskeleton-regulatory complex protein SLA1 (SLA1), found in Mycosarcoma maydis (Corn smut fungus).